A 252-amino-acid chain; its full sequence is uncharacterized protein (252 aa).

Serine 195 and serine 209 each carry phosphoserine.

In terms of tissue distribution, testis-specific. Highly expressed in spermatocytes (at protein level).

Its function is as follows. Essential for normal spermatogenesis and male fertility. This is an uncharacterized protein from Mus musculus (Mouse).